Reading from the N-terminus, the 193-residue chain is Peptidyl-tRNA hydrolase (193 aa).

TRNA is bound at residue Y15. H20 (proton acceptor) is an active-site residue. Residues F65, N67, and N113 each coordinate tRNA.

This sequence belongs to the PTH family. As to quaternary structure, monomer.

The protein resides in the cytoplasm. The enzyme catalyses an N-acyl-L-alpha-aminoacyl-tRNA + H2O = an N-acyl-L-amino acid + a tRNA + H(+). Functionally, hydrolyzes ribosome-free peptidyl-tRNAs (with 1 or more amino acids incorporated), which drop off the ribosome during protein synthesis, or as a result of ribosome stalling. Its function is as follows. Catalyzes the release of premature peptidyl moieties from peptidyl-tRNA molecules trapped in stalled 50S ribosomal subunits, and thus maintains levels of free tRNAs and 50S ribosomes. The sequence is that of Peptidyl-tRNA hydrolase from Ehrlichia canis (strain Jake).